The chain runs to 385 residues: Centrosomal protein of 44 kDa (385 aa).

The tract at residues Arg-11 to Glu-191 is binds with microtubules and centrioles. Acidic residues predominate over residues Glu-194–Glu-204. The tract at residues Glu-194–Asn-224 is disordered. Coiled-coil stretches lie at residues Asn-224–Ile-263 and Thr-353–Lys-379.

As to quaternary structure, binds to centriolar microtubules.

It localises to the cytoplasm. The protein resides in the cytoskeleton. Its subcellular location is the microtubule organizing center. The protein localises to the centrosome. It is found in the centriole. It localises to the spindle pole. The protein resides in the midbody. Centriole-enriched microtubule-binding protein involved in centriole biogenesis. In collaboration with CEP295 and POC1B, is required for the centriole-to-centrosome conversion by ensuring the formation of bona fide centriole wall. Functions as a linker component that maintains centrosome cohesion. Associates with CROCC and regulates its stability and localization to the centrosome. In Xenopus tropicalis (Western clawed frog), this protein is Centrosomal protein of 44 kDa (cep44).